The primary structure comprises 213 residues: MKDTYRHQGKRQQLVKTVKKKGITDEKVLGAIGNIPRHLFMDSSFEDHAYQDKAFPIAADQTISQPYTVAFQSELLEIKKGEKVLEVGTGSGYQTAVLCLLGAKVYSIERQRELYKKTKSFLSKLGYRPKYLSFGDGYKGIPEYAPYDKIIVTAGAPEVPRDLLSQLKVGGRLVIPVGTDVQTMTLFIRKSAKEFDKNEFGAFRFVPLLEDKN.

The active site involves S64.

Belongs to the methyltransferase superfamily. L-isoaspartyl/D-aspartyl protein methyltransferase family.

The protein resides in the cytoplasm. It carries out the reaction [protein]-L-isoaspartate + S-adenosyl-L-methionine = [protein]-L-isoaspartate alpha-methyl ester + S-adenosyl-L-homocysteine. Catalyzes the methyl esterification of L-isoaspartyl residues in peptides and proteins that result from spontaneous decomposition of normal L-aspartyl and L-asparaginyl residues. It plays a role in the repair and/or degradation of damaged proteins. This chain is Protein-L-isoaspartate O-methyltransferase, found in Christiangramia forsetii (strain DSM 17595 / CGMCC 1.15422 / KT0803) (Gramella forsetii).